A 337-amino-acid chain; its full sequence is Mitochondrial uncoupling protein 6 (337 aa).

Solcar repeat units follow at residues 4 to 136, 145 to 236, and 246 to 331; these read KPFL…LKRR, FPLV…VKEI, and GGIG…VRGL. Helical transmembrane passes span 6-26, 105-125, 151-171, 210-230, 252-272, and 304-324; these read FLEGGIAAIIAGALTHPLDLI, PAALFSGVSATILRQMLYSAT, ITAGLIAGAVGSVVGNPADVA, RGSWLTVNRAMIVTASQLATY, VAASFAAGIVAAVASNPIDVV, and YKGLVPTATRQGPFTMILFLT.

This sequence belongs to the mitochondrial carrier (TC 2.A.29) family.

Its subcellular location is the mitochondrion inner membrane. Its function is as follows. PUMPS are mitochondrial transporter proteins that create proton leaks across the inner mitochondrial membrane, thus uncoupling oxidative phosphorylation. This leads to a decrease in the efficiency of oxidative phosphorylation and an increase in heat production. May be involved in protecting plant cells against oxidative stress damage. Recombinant PUMP6, reconstituted into liposomes, transports a wide range of dicarboxylic acids including malate, oxaloacetate and succinate as well as phosphate, sulfate and thiosulfate. However, it is unknown if these transports are of any biological significance in vivo. This is Mitochondrial uncoupling protein 6 (PUMP6) from Arabidopsis thaliana (Mouse-ear cress).